Reading from the N-terminus, the 124-residue chain is Small ribosomal subunit protein uS12 (124 aa).

Aspartate 89 is modified (3-methylthioaspartic acid).

It belongs to the universal ribosomal protein uS12 family. In terms of assembly, part of the 30S ribosomal subunit. Contacts proteins S8 and S17. May interact with IF1 in the 30S initiation complex.

In terms of biological role, with S4 and S5 plays an important role in translational accuracy. Functionally, interacts with and stabilizes bases of the 16S rRNA that are involved in tRNA selection in the A site and with the mRNA backbone. Located at the interface of the 30S and 50S subunits, it traverses the body of the 30S subunit contacting proteins on the other side and probably holding the rRNA structure together. The combined cluster of proteins S8, S12 and S17 appears to hold together the shoulder and platform of the 30S subunit. This chain is Small ribosomal subunit protein uS12, found in Treponema pallidum subsp. pallidum (strain SS14).